Here is a 298-residue protein sequence, read N- to C-terminus: Acetylglutamate kinase (298 aa).

Residues 69 to 70 (GG), arginine 91, and asparagine 191 each bind substrate.

The protein belongs to the acetylglutamate kinase family. ArgB subfamily.

The protein resides in the cytoplasm. The catalysed reaction is N-acetyl-L-glutamate + ATP = N-acetyl-L-glutamyl 5-phosphate + ADP. The protein operates within amino-acid biosynthesis; L-arginine biosynthesis; N(2)-acetyl-L-ornithine from L-glutamate: step 2/4. In terms of biological role, catalyzes the ATP-dependent phosphorylation of N-acetyl-L-glutamate. The chain is Acetylglutamate kinase from Neisseria meningitidis serogroup C (strain 053442).